The primary structure comprises 376 residues: Ribosomal RNA large subunit methyltransferase G (376 aa).

This sequence belongs to the methyltransferase superfamily. RlmG family.

Its subcellular location is the cytoplasm. The catalysed reaction is guanosine(1835) in 23S rRNA + S-adenosyl-L-methionine = N(2)-methylguanosine(1835) in 23S rRNA + S-adenosyl-L-homocysteine + H(+). Functionally, specifically methylates the guanine in position 1835 (m2G1835) of 23S rRNA. This chain is Ribosomal RNA large subunit methyltransferase G, found in Cronobacter sakazakii (strain ATCC BAA-894) (Enterobacter sakazakii).